Reading from the N-terminus, the 372-residue chain is MHNQAPIQRRKSTRIYVGNVPIGDGAPITVQSMTNTRTTDVEATVNQIKALERVGADIVRVSVPTMDAAEAFKLIKQQVSVPLVADIHFDYRIALKVAEYGVDCLRINPGNIGNEERIRMVVDCARDKNIPIRIGVNAGSLEKDLQEKYGEPTPQALLESAMRHVDHLDRLNFEQFKVSVKASDVFLAVESYRLLAKQIDQPLHLGITEAGGARSGAVKSAIGLGLLLSEGIGDTLRVSLAADPVEEIKVGFDILKSLRIRARGINFIACPTCSRQEFDVIGTVNALEQRLEDIITPMDVSIIGCVVNGPGEALVSTLGVTGGNKKSGLYEDGVRKDRLDNDDMIAQLESRIRAKASQLDEARRIDVLQVEK.

Residues Cys270, Cys273, Cys305, and Glu312 each contribute to the [4Fe-4S] cluster site.

This sequence belongs to the IspG family. Requires [4Fe-4S] cluster as cofactor.

The enzyme catalyses (2E)-4-hydroxy-3-methylbut-2-enyl diphosphate + oxidized [flavodoxin] + H2O + 2 H(+) = 2-C-methyl-D-erythritol 2,4-cyclic diphosphate + reduced [flavodoxin]. It functions in the pathway isoprenoid biosynthesis; isopentenyl diphosphate biosynthesis via DXP pathway; isopentenyl diphosphate from 1-deoxy-D-xylulose 5-phosphate: step 5/6. Functionally, converts 2C-methyl-D-erythritol 2,4-cyclodiphosphate (ME-2,4cPP) into 1-hydroxy-2-methyl-2-(E)-butenyl 4-diphosphate. This Salmonella arizonae (strain ATCC BAA-731 / CDC346-86 / RSK2980) protein is 4-hydroxy-3-methylbut-2-en-1-yl diphosphate synthase (flavodoxin).